A 199-amino-acid chain; its full sequence is MTRFAEPMARLIEELRKLPGIGTRSAQRLAFHILRSSTADAEALAGAVRDLKAQLRLCSVCNNITDVDPCVFCSSPTRNQRLVCVVEEPTNIAAVEKTRGYNGVYHVLHGTLSPLHGVGPEHLRTVNLLARVERGEVDELILATSPTVEGEATANYLADLLRPLRVRLTRIATGVPAGSDIEYVDEVTMTRALEGRREL.

Residues C58–C73 form a C4-type zinc finger. Positions R81–P176 constitute a Toprim domain.

The protein belongs to the RecR family.

May play a role in DNA repair. It seems to be involved in an RecBC-independent recombinational process of DNA repair. It may act with RecF and RecO. This Acidobacterium capsulatum (strain ATCC 51196 / DSM 11244 / BCRC 80197 / JCM 7670 / NBRC 15755 / NCIMB 13165 / 161) protein is Recombination protein RecR.